The following is a 3184-amino-acid chain: WD repeat- and FYVE domain-containing protein 4 (3184 aa).

Residues 1–18 (MEAEDLSKAEDRNEDPGS) show a composition bias toward basic and acidic residues. Disordered regions lie at residues 1–39 (MEAEDLSKAEDRNEDPGSKNEGQLAAVQPDVPHGGQSSS), 944–993 (SHTH…QDST), 1837–1869 (VGAESTRNTSSPEAAAEGDSTVEGLQAPTKAHP), and 2309–2335 (ALSSGRHKESQDKNDHISQTNAENQDE). Over residues 981-993 (QAPQPLGESQDST) the composition is skewed to polar residues. Residues 2314–2324 (RHKESQDKNDH) show a composition bias toward basic and acidic residues. The region spanning 2385 to 2510 (LDKEKVTQKF…DRSKAFKSFC (126 aa)) is the BEACH-type PH domain. One can recognise a BEACH domain in the interval 2527–2821 (SLRRYPGSDR…QLFTKPHPAR (295 aa)). WD repeat units lie at residues 2863-2922 (MYLF…YGSD), 2923-2972 (KVLM…PRGL), 2973-3014 (RLRQ…LDHL), 3015-3057 (THVT…GQPL), 3058-3141 (ASIT…ELDV), and 3142-3184 (SIAL…SADG). Residues 3107 to 3128 (SVPGRPAGEEPPAQPPSPRGHK) form a disordered region.

Interacts with HSP90AB1.

The protein resides in the early endosome. It localises to the endoplasmic reticulum. Functionally, plays a critical role in the regulation of cDC1-mediated cross-presentation of viral and tumor antigens in dendritic cells. Mechanistically, acts near the plasma membrane and interacts with endosomal membranes to promote endosomal-to-cytosol antigen trafficking. Also plays a role in B-cell survival through regulation of autophagy. This is WD repeat- and FYVE domain-containing protein 4 (WDFY4) from Homo sapiens (Human).